The chain runs to 166 residues: Thiamine precursor transporter HmpT (166 aa).

Transmembrane regions (helical) follow at residues Leu14–Pro34, Gly35–Phe55, Ile62–Phe82, Phe105–Gly125, and Trp126–Leu146.

In terms of assembly, in E.coli forms a stable energy-coupling factor (ECF) transporter complex composed of 2 membrane-embedded substrate-binding protein (S component), 2 ATP-binding proteins (A and A' components) and 2 transmembrane proteins (T component), probably with a stoichiometry of 2:1:1:2. May be able to interact with more than 1 S component at a time.

The protein resides in the cell membrane. Probably a thiamine precursor-binding protein that interacts with the energy-coupling factor (ECF) ABC-transporter complex. Unlike classic ABC transporters this ECF transporter provides the energy necessary to transport a number of different substrates. The substrates themselves are bound by transmembrane, not extracytoplasmic soluble proteins. In Lactococcus lactis subsp. cremoris (strain MG1363), this protein is Thiamine precursor transporter HmpT (hmpT).